The primary structure comprises 242 residues: Eukaryotic translation initiation factor 3 subunit J (242 aa).

Residues 1 to 10 (MASWDDEDFE) show a composition bias toward acidic residues. Disordered regions lie at residues 1–58 (MASW…KAQR), 71–97 (MKLKPEDASTKRDRQRQAELDSDMMNA), and 201–242 (REEK…DDFM). Positions 11–21 (VPAAATPAVPA) are enriched in low complexity. Residues 23–38 (WDDDEEEDVMDSWDAE) show a composition bias toward acidic residues. Over residues 71–89 (MKLKPEDASTKRDRQRQAE) the composition is skewed to basic and acidic residues.

This sequence belongs to the eIF-3 subunit J family. Component of the eukaryotic translation initiation factor 3 (eIF-3) complex.

The protein localises to the cytoplasm. Component of the eukaryotic translation initiation factor 3 (eIF-3) complex, which is involved in protein synthesis of a specialized repertoire of mRNAs and, together with other initiation factors, stimulates binding of mRNA and methionyl-tRNAi to the 40S ribosome. The eIF-3 complex specifically targets and initiates translation of a subset of mRNAs involved in cell proliferation. This is Eukaryotic translation initiation factor 3 subunit J from Yarrowia lipolytica (strain CLIB 122 / E 150) (Yeast).